We begin with the raw amino-acid sequence, 208 residues long: Recombination protein RecR (208 aa).

Residues 60 to 75 (CKVCHNICDDEVCSIC) form a C4-type zinc finger. One can recognise a Toprim domain in the interval 83–178 (SLVCVVENIK…RISVIARGVS (96 aa)).

The protein belongs to the RecR family.

Its function is as follows. May play a role in DNA repair. It seems to be involved in an RecBC-independent recombinational process of DNA repair. It may act with RecF and RecO. This is Recombination protein RecR from Parabacteroides distasonis (strain ATCC 8503 / DSM 20701 / CIP 104284 / JCM 5825 / NCTC 11152).